The chain runs to 222 residues: MNSTPKAVVIFSGGQDSTTCLFQAIQEFGVENVEVVTFQYGQRHAIELEKAAWIAKDLGVKQTLIDTSVIKAITSNAMMEEREIKQEGNTPNTFVDGRNALFLLYTAIYAKGQGIRTIFTGVCETDFSGYPDCRDVFVKSMNVTLNLAMDYNFNIRTPLMYLTKKQTWALADKLGAFDYIRQHTHTCYLGVEGGCHTCPSCVLREKGLNEYLSEKTSGQKYV.

ATP is bound at residue phenylalanine 11–leucine 21. Zn(2+)-binding residues include cysteine 187, cysteine 195, cysteine 198, and cysteine 201.

It belongs to the QueC family. The cofactor is Zn(2+).

The catalysed reaction is 7-carboxy-7-deazaguanine + NH4(+) + ATP = 7-cyano-7-deazaguanine + ADP + phosphate + H2O + H(+). Its pathway is purine metabolism; 7-cyano-7-deazaguanine biosynthesis. Functionally, catalyzes the ATP-dependent conversion of 7-carboxy-7-deazaguanine (CDG) to 7-cyano-7-deazaguanine (preQ(0)). This chain is 7-cyano-7-deazaguanine synthase, found in Actinobacillus pleuropneumoniae serotype 7 (strain AP76).